Here is a 497-residue protein sequence, read N- to C-terminus: MTKKYILALDQGTTSSRAILFNEAGEIIGIEQKEFQQIFPKPGWVEHDANEIWASVLSVIAGVLLKTNVEAKEIAAIGITNQRETAVVWEKESGRPIYNALVWQSRQTAGICERLRAEGFSEMVTEKTGLLIDPYFSGTKVRWILDHVDGAQERAERGELLFGTIDTWLIWKLSGGKAHVTDYSNASRTLLYNIYEQCWDDELLKMLNVPRAMLPDVRPSSEVYAETVSYHFFGEEIPIAGAAGDQQAALFGQACFEKGMAKNTYGTGCFMLMNTGNQGVKSKHGLLTTIAWGLDGKVEYALEGSIFVAGSAIQWLRDGLRMMKSAKESEGYATKVTSADGVYVVPAFVGLGTPYWDSDVRGAVFGLTRGTSKEHFIRATLESLAYQTKDVLQAMEADSGISLKTLRVDGGAVANNFLMQFQSDLLGVSVERPTVQETTALGAAYLAGLAVGFWTSKEEITNNWNLEQKFSAEMEETDRAKLYEGWQKAVRAAQAFK.

Threonine 13 serves as a coordination point for ADP. ATP contacts are provided by threonine 13, threonine 14, and serine 15. Sn-glycerol 3-phosphate is bound at residue threonine 13. Arginine 17 serves as a coordination point for ADP. Sn-glycerol 3-phosphate is bound by residues arginine 83, glutamate 84, and tyrosine 135. Positions 83, 84, and 135 each coordinate glycerol. At histidine 231 the chain carries Phosphohistidine; by HPr. Aspartate 245 contacts sn-glycerol 3-phosphate. Positions 245 and 246 each coordinate glycerol. ADP-binding residues include threonine 267 and glycine 310. 4 residues coordinate ATP: threonine 267, glycine 310, glutamine 314, and glycine 411. Residues glycine 411 and asparagine 415 each contribute to the ADP site.

The protein belongs to the FGGY kinase family. Homotetramer and homodimer (in equilibrium). Post-translationally, the phosphoenolpyruvate-dependent sugar phosphotransferase system (PTS), including enzyme I, and histidine-containing protein (HPr) are required for the phosphorylation, which leads to the activation of the enzyme.

The enzyme catalyses glycerol + ATP = sn-glycerol 3-phosphate + ADP + H(+). It functions in the pathway polyol metabolism; glycerol degradation via glycerol kinase pathway; sn-glycerol 3-phosphate from glycerol: step 1/1. Its activity is regulated as follows. Activated by phosphorylation and inhibited by fructose 1,6-bisphosphate (FBP). Its function is as follows. Key enzyme in the regulation of glycerol uptake and metabolism. Catalyzes the phosphorylation of glycerol to yield sn-glycerol 3-phosphate. This Halalkalibacterium halodurans (strain ATCC BAA-125 / DSM 18197 / FERM 7344 / JCM 9153 / C-125) (Bacillus halodurans) protein is Glycerol kinase.